A 428-amino-acid chain; its full sequence is MLQTPMTGMVQKLDQKLPVANEYLLLSGGVREGVVDLDLDELNVYARGTDYDMDFTLLVPALKLHDRNQPVTLDMRHSALCHSWLSLRLFDEGTISKWKGCCTIADHINGATNYFFSPTKVADWFYDSISIVLSEIQKKPQRGMPKVEKVEKNGTIISIILGVGSSRMLYDIVPVVSFKGWPAVAQSWLMENHFWDGKITEEEVISGFYLVPACSYKGKKDNEWRLSFARSEVQLKKCISGSLMQAYQACKAIIIKLLSRPKAISPYHLRSMMLWACDRLPASYLAQEDYAAHFLLGLIDDLQHCLVNKMCPNYFIPQCNMLEHLSEETVMLHARKLSSVRSDPAEHLRTAIEHVKAANRLTLKLQRRGSTTSIPSPQSDGGDPNQPDDRLAKKLQQLVTENPGKSISVFINPDDVTRPHFRIDDKFF.

Positions 366–389 (QRRGSTTSIPSPQSDGGDPNQPDD) are disordered. A compositionally biased stretch (polar residues) spans 368 to 379 (RGSTTSIPSPQS). Thr-372 carries the post-translational modification Phosphothreonine. A phosphoserine mark is found at Ser-373, Ser-376, and Ser-379.

The protein belongs to the mab-21 family.

In terms of biological role, probable nucleotidyltransferase that catalyzes the formation of cyclic dinucleotide second messenger in response to some unknown stimulus. This is Nucleotidyltransferase MB21D2 from Mus musculus (Mouse).